The primary structure comprises 69 residues: DNA-directed RNA polymerase subunit omega (69 aa).

This sequence belongs to the RNA polymerase subunit omega family. As to quaternary structure, the RNAP catalytic core consists of 2 alpha, 1 beta, 1 beta' and 1 omega subunit. When a sigma factor is associated with the core the holoenzyme is formed, which can initiate transcription.

It catalyses the reaction RNA(n) + a ribonucleoside 5'-triphosphate = RNA(n+1) + diphosphate. In terms of biological role, promotes RNA polymerase assembly. Latches the N- and C-terminal regions of the beta' subunit thereby facilitating its interaction with the beta and alpha subunits. This chain is DNA-directed RNA polymerase subunit omega, found in Heliobacterium modesticaldum (strain ATCC 51547 / Ice1).